Reading from the N-terminus, the 254-residue chain is Undecaprenyl-diphosphatase (254 aa).

The next 8 helical transmembrane spans lie at 1 to 21 (MDII…FLPI), 41 to 61 (LTKA…MLIY), 70 to 90 (IDLW…GFIF), 97 to 117 (LFNV…FLIV), 134 to 154 (VSWT…IPGT), 175 to 195 (AEFS…YDLL), 209 to 229 (FLIG…LFLV), and 234 to 254 (FTFV…LMIL).

Belongs to the UppP family.

Its subcellular location is the cell inner membrane. The enzyme catalyses di-trans,octa-cis-undecaprenyl diphosphate + H2O = di-trans,octa-cis-undecaprenyl phosphate + phosphate + H(+). In terms of biological role, catalyzes the dephosphorylation of undecaprenyl diphosphate (UPP). Confers resistance to bacitracin. In Sulfurovum sp. (strain NBC37-1), this protein is Undecaprenyl-diphosphatase.